Here is a 158-residue protein sequence, read N- to C-terminus: uncharacterized protein (158 aa).

Positions 1–22 (MKKIPNKLLAVSAFLTITTTYA) are cleaved as a signal peptide. The chain crosses the membrane as a helical span at residues 120–140 (LTGIIEYDTKFENHYETLVEA).

Its subcellular location is the cell membrane. This is an uncharacterized protein from Bacillus cereus.